The chain runs to 385 residues: Cell division protein FtsZ (385 aa).

Residues 37–41 (GGGSN), 125–127 (GTG), glutamate 156, lysine 160, and aspartate 204 contribute to the GTP site.

Belongs to the FtsZ family. As to quaternary structure, homodimer. Polymerizes to form a dynamic ring structure in a strictly GTP-dependent manner. Interacts directly with several other division proteins.

It localises to the cytoplasm. Functionally, essential cell division protein that forms a contractile ring structure (Z ring) at the future cell division site. The regulation of the ring assembly controls the timing and the location of cell division. One of the functions of the FtsZ ring is to recruit other cell division proteins to the septum to produce a new cell wall between the dividing cells. Binds GTP and shows GTPase activity. The sequence is that of Cell division protein FtsZ from Helicobacter pylori (strain J99 / ATCC 700824) (Campylobacter pylori J99).